A 296-amino-acid polypeptide reads, in one-letter code: Heme oxygenase 1 (296 aa).

Over 1–273 the chain is Cytoplasmic; it reads METSQPHNAE…RMQADMLTTS (273 aa). 4 residues coordinate heme b: Lys21, His28, Tyr137, and Arg186. Residues 231-264 form a disordered region; that stretch reads GHAVQPKAELRTRSVNKSHENSPAAGKESERTSR. Residues 238-250 show a composition bias toward basic and acidic residues; that stretch reads AELRTRSVNKSHE. Residues 274–296 traverse the membrane as a helical; Anchor for type IV membrane protein segment; that stretch reads PLVRWLLALGFIATTVAVGLFAM.

The protein belongs to the heme oxygenase family. As to quaternary structure, homodimer and higher order homooligomer. Oligomerization is crucial for its stability and function in the endoplasmic reticulum. Post-translationally, a soluble form arises by proteolytic removal of the membrane anchor.

The protein localises to the endoplasmic reticulum membrane. The catalysed reaction is heme b + 3 reduced [NADPH--hemoprotein reductase] + 3 O2 = biliverdin IXalpha + CO + Fe(2+) + 3 oxidized [NADPH--hemoprotein reductase] + 3 H2O + H(+). Inhibited by metalloporphyrins in the following order of decreasing potency: tin mesoporphyrin &gt; tin protoporphyrin &gt; zinc protoporphyrin &gt; manganese protoporphyrin &gt; cobalt protoporphyrin. Its function is as follows. Catalyzes the oxidative cleavage of heme at the alpha-methene bridge carbon, released as carbon monoxide (CO), to generate biliverdin IXalpha, while releasing the central heme iron chelate as ferrous iron. Affords protection against programmed cell death and this cytoprotective effect relies on its ability to catabolize free heme and prevent it from sensitizing cells to undergo apoptosis. In terms of biological role, catalyzes the oxidative cleavage of heme at the alpha-methene bridge carbon, released as carbon monoxide (CO), to generate biliverdin IXalpha, while releasing the central heme iron chelate as ferrous iron. This Gallus gallus (Chicken) protein is Heme oxygenase 1 (HMOX1).